Reading from the N-terminus, the 156-residue chain is MPRRRRIEPRKILPDPKFGSELLAKFINVLMVDGKKSIAESIVYNALETLAQRTGKDALESFEIALENVRPTVEVKSRRVGGSTYQVPVEVRPTRRNALGMRWIVEAARKRGDKSMALRLANELSDAVDNKGAAVKKREDVHRMAEANKAFAHFRW.

Belongs to the universal ribosomal protein uS7 family. As to quaternary structure, part of the 30S ribosomal subunit. Contacts proteins S9 and S11.

In terms of biological role, one of the primary rRNA binding proteins, it binds directly to 16S rRNA where it nucleates assembly of the head domain of the 30S subunit. Is located at the subunit interface close to the decoding center, probably blocks exit of the E-site tRNA. The polypeptide is Small ribosomal subunit protein uS7 (Actinobacillus succinogenes (strain ATCC 55618 / DSM 22257 / CCUG 43843 / 130Z)).